Consider the following 279-residue polypeptide: Thymidylate synthase (279 aa).

141 to 142 (RR) contacts dUMP. Residue C161 is the Nucleophile of the active site. Residues 181–184 (RSND), N192, and 222–224 (HIY) each bind dUMP. D184 contacts (6R)-5,10-methylene-5,6,7,8-tetrahydrofolate. A278 is a binding site for (6R)-5,10-methylene-5,6,7,8-tetrahydrofolate.

The protein belongs to the thymidylate synthase family. Bacterial-type ThyA subfamily. In terms of assembly, homodimer.

It localises to the cytoplasm. It carries out the reaction dUMP + (6R)-5,10-methylene-5,6,7,8-tetrahydrofolate = 7,8-dihydrofolate + dTMP. Its pathway is pyrimidine metabolism; dTTP biosynthesis. Catalyzes the reductive methylation of 2'-deoxyuridine-5'-monophosphate (dUMP) to 2'-deoxythymidine-5'-monophosphate (dTMP) while utilizing 5,10-methylenetetrahydrofolate (mTHF) as the methyl donor and reductant in the reaction, yielding dihydrofolate (DHF) as a by-product. This enzymatic reaction provides an intracellular de novo source of dTMP, an essential precursor for DNA biosynthesis. This Bacillus licheniformis (strain ATCC 14580 / DSM 13 / JCM 2505 / CCUG 7422 / NBRC 12200 / NCIMB 9375 / NCTC 10341 / NRRL NRS-1264 / Gibson 46) protein is Thymidylate synthase.